The following is a 290-amino-acid chain: 4-hydroxy-3-methylbut-2-enyl diphosphate reductase (290 aa).

Residue C12 coordinates [4Fe-4S] cluster. Residues H50 and H83 each contribute to the (2E)-4-hydroxy-3-methylbut-2-enyl diphosphate site. Dimethylallyl diphosphate is bound by residues H50 and H83. The isopentenyl diphosphate site is built by H50 and H83. C105 contributes to the [4Fe-4S] cluster binding site. H133 lines the (2E)-4-hydroxy-3-methylbut-2-enyl diphosphate pocket. H133 provides a ligand contact to dimethylallyl diphosphate. Isopentenyl diphosphate is bound at residue H133. E135 (proton donor) is an active-site residue. Position 173 (T173) interacts with (2E)-4-hydroxy-3-methylbut-2-enyl diphosphate. C202 is a [4Fe-4S] cluster binding site. (2E)-4-hydroxy-3-methylbut-2-enyl diphosphate contacts are provided by S230, N232, and S274. The dimethylallyl diphosphate site is built by S230, N232, and S274. The isopentenyl diphosphate site is built by S230, N232, and S274.

Belongs to the IspH family. It depends on [4Fe-4S] cluster as a cofactor.

It catalyses the reaction isopentenyl diphosphate + 2 oxidized [2Fe-2S]-[ferredoxin] + H2O = (2E)-4-hydroxy-3-methylbut-2-enyl diphosphate + 2 reduced [2Fe-2S]-[ferredoxin] + 2 H(+). The catalysed reaction is dimethylallyl diphosphate + 2 oxidized [2Fe-2S]-[ferredoxin] + H2O = (2E)-4-hydroxy-3-methylbut-2-enyl diphosphate + 2 reduced [2Fe-2S]-[ferredoxin] + 2 H(+). Its pathway is isoprenoid biosynthesis; dimethylallyl diphosphate biosynthesis; dimethylallyl diphosphate from (2E)-4-hydroxy-3-methylbutenyl diphosphate: step 1/1. It participates in isoprenoid biosynthesis; isopentenyl diphosphate biosynthesis via DXP pathway; isopentenyl diphosphate from 1-deoxy-D-xylulose 5-phosphate: step 6/6. Catalyzes the conversion of 1-hydroxy-2-methyl-2-(E)-butenyl 4-diphosphate (HMBPP) into a mixture of isopentenyl diphosphate (IPP) and dimethylallyl diphosphate (DMAPP). Acts in the terminal step of the DOXP/MEP pathway for isoprenoid precursor biosynthesis. This Nitratidesulfovibrio vulgaris (strain ATCC 29579 / DSM 644 / CCUG 34227 / NCIMB 8303 / VKM B-1760 / Hildenborough) (Desulfovibrio vulgaris) protein is 4-hydroxy-3-methylbut-2-enyl diphosphate reductase.